The sequence spans 283 residues: Thymidylate synthase (283 aa).

A dUMP-binding site is contributed by Arg21. His51 contributes to the (6R)-5,10-methylene-5,6,7,8-tetrahydrofolate binding site. Residue 123–124 coordinates dUMP; that stretch reads RR. The Nucleophile role is filled by Cys156. DUMP-binding positions include 185–188, Asn196, and 226–228; these read RSAD and HIY. (6R)-5,10-methylene-5,6,7,8-tetrahydrofolate is bound at residue Asp188. Residue Ala282 coordinates (6R)-5,10-methylene-5,6,7,8-tetrahydrofolate.

The protein belongs to the thymidylate synthase family. Bacterial-type ThyA subfamily. Homodimer.

It is found in the cytoplasm. The enzyme catalyses dUMP + (6R)-5,10-methylene-5,6,7,8-tetrahydrofolate = 7,8-dihydrofolate + dTMP. The protein operates within pyrimidine metabolism; dTTP biosynthesis. Its function is as follows. Catalyzes the reductive methylation of 2'-deoxyuridine-5'-monophosphate (dUMP) to 2'-deoxythymidine-5'-monophosphate (dTMP) while utilizing 5,10-methylenetetrahydrofolate (mTHF) as the methyl donor and reductant in the reaction, yielding dihydrofolate (DHF) as a by-product. This enzymatic reaction provides an intracellular de novo source of dTMP, an essential precursor for DNA biosynthesis. This is Thymidylate synthase from Flavobacterium johnsoniae (strain ATCC 17061 / DSM 2064 / JCM 8514 / BCRC 14874 / CCUG 350202 / NBRC 14942 / NCIMB 11054 / UW101) (Cytophaga johnsonae).